The sequence spans 348 residues: D-alanine--D-alanine ligase (348 aa).

An ATP-grasp domain is found at 132-334 (KRVLESIGIP…YPDLIEVLVT (203 aa)). 162 to 217 (LARLTFPIFVKPANMGSSVGISKAQTKVELRKAIQLALTYDSRVLIEQGVVAREIE) serves as a coordination point for ATP. The Mg(2+) site is built by D288, E301, and N303.

The protein belongs to the D-alanine--D-alanine ligase family. It depends on Mg(2+) as a cofactor. Requires Mn(2+) as cofactor.

The protein localises to the cytoplasm. It catalyses the reaction 2 D-alanine + ATP = D-alanyl-D-alanine + ADP + phosphate + H(+). Its pathway is cell wall biogenesis; peptidoglycan biosynthesis. In terms of biological role, cell wall formation. The polypeptide is D-alanine--D-alanine ligase (Streptococcus pyogenes serotype M2 (strain MGAS10270)).